Consider the following 306-residue polypeptide: Ornithine carbamoyltransferase 1, anabolic (306 aa).

Carbamoyl phosphate-binding positions include 53-56 (STRT), Gln-80, Arg-104, and 131-134 (HPCQ). L-ornithine-binding positions include Asn-162, Asp-219, and 223–224 (SM). Residues 259–260 (CL) and Arg-287 each bind carbamoyl phosphate.

This sequence belongs to the aspartate/ornithine carbamoyltransferase superfamily. OTCase family. In terms of assembly, homotrimer.

It is found in the cytoplasm. The catalysed reaction is carbamoyl phosphate + L-ornithine = L-citrulline + phosphate + H(+). Its pathway is amino-acid biosynthesis; L-arginine biosynthesis; L-arginine from L-ornithine and carbamoyl phosphate: step 1/3. Its activity is regulated as follows. Reversibly inhibited by inhibited by phaseolotoxin and octicidine. Reversibly catalyzes the transfer of the carbamoyl group from carbamoyl phosphate (CP) to the N(epsilon) atom of ornithine (ORN) to produce L-citrulline, which is a substrate for argininosuccinate synthetase, the enzyme involved in the final step in arginine biosynthesis. The polypeptide is Ornithine carbamoyltransferase 1, anabolic (Pseudomonas savastanoi pv. phaseolicola (Pseudomonas syringae pv. phaseolicola)).